A 97-amino-acid chain; its full sequence is MIHVEVVYALPTEQVVFKLAVKADQTVQEIIEQSGVLERYPDIDLVVNKVGVFSRNVKLDATIRDKDRIEIYRPLLADPKEIRRKRAAQAKKEAAKK.

It belongs to the UPF0125 (RnfH) family.

The chain is Protein RnfH from Aliivibrio salmonicida (strain LFI1238) (Vibrio salmonicida (strain LFI1238)).